The following is a 711-amino-acid chain: MLNFFAAAPRGYEYALSLELAEFGAAEIKESVAGVYFSAPLNLAYRITLWSRLASRIILVIYKGPCENPEQLYNAAYCIDWQTHFSNKSSFSIDFHGVGGFIKNSQFGALKIKDAVVDRFRDDGCPRPDVARVDADFKIDAHYRRGQITLGINFSGPALHQRGYRSTTGEAPLKENLAANMLVRSGWQQSPKDLLDPFCGSGTILIEAAMMACDIAPALQRRRFGFEHWLRHQEADWQELLAEAKARASIGTKRCEIKFYGSDIDSRLVALAKRNAQNAGVAELIELSVSNALNVTPPVEQGYLITNPPYGERLGNVTSLLQLYYQLGDKLKAEFGGWQVAVLNSDIELLSALKLKADKQMKMYNGALECAFNLYTLHANSTRRLDPSQVLSQGGEVSEVATAFSNRIKKNHKQLSKWAQREGIDSYRLYDADIPEYNVAVDIYLDHVVIQEYSAPKSIPEAVTKRRLTDVLLVLPQAIGVDPDKIILKTRERQKGTNQYQKLDATKLELVTTEYGAKFKLNLKDYLDTGLFLDHRLTRKLVGEKSKGRDVLNLFAYTGSASVHAALGGAKSVTTVDMSNTYLNWAQDNFELNGLKGKQYQFIQGDCLQWIDDCDQQYDLIFIDPPTFSNSKRMEDSFDVQRDHVKLLSALVKLLRPGGEILFSNNKRKFKMDSEALSALGLSITNLDKQTLPLDYKRNPHIHNTWLIQHA.

The THUMP domain occupies 43 to 154; it reads LAYRITLWSR…RGQITLGINF (112 aa).

Belongs to the methyltransferase superfamily. RlmKL family.

Its subcellular location is the cytoplasm. The catalysed reaction is guanosine(2445) in 23S rRNA + S-adenosyl-L-methionine = N(2)-methylguanosine(2445) in 23S rRNA + S-adenosyl-L-homocysteine + H(+). It carries out the reaction guanosine(2069) in 23S rRNA + S-adenosyl-L-methionine = N(2)-methylguanosine(2069) in 23S rRNA + S-adenosyl-L-homocysteine + H(+). In terms of biological role, specifically methylates the guanine in position 2445 (m2G2445) and the guanine in position 2069 (m7G2069) of 23S rRNA. This chain is Ribosomal RNA large subunit methyltransferase K/L, found in Shewanella loihica (strain ATCC BAA-1088 / PV-4).